Consider the following 695-residue polypeptide: Serotransferrin (695 aa).

Residues 1-19 (MRLAAGALLACAALGLCLA) form the signal peptide. Transferrin-like domains lie at 25–347 (VRWC…NLRE) and 361–680 (VKWC…NLRK). Cystine bridges form between Cys28–Cys67 and Cys38–Cys58. Arg42 is subject to Dimethylated arginine. Residues Asp82 and Tyr114 each contribute to the Fe(3+) site. 17 disulfides stabilise this stretch: Cys137/Cys213, Cys156/Cys350, Cys177/Cys193, Cys180/Cys196, Cys190/Cys198, Cys246/Cys260, Cys358/Cys612, Cys364/Cys396, Cys374/Cys387, Cys421/Cys690, Cys436/Cys653, Cys468/Cys539, Cys492/Cys681, Cys502/Cys516, Cys513/Cys522, Cys579/Cys593, and Cys631/Cys636. Hydrogencarbonate is bound by residues Thr139, Arg143, Ala145, and Gly146. Residue Tyr207 coordinates Fe(3+). His268 is a Fe(3+) binding site. Phosphoserine is present on Ser389. Positions 411 and 444 each coordinate Fe(3+). 4 residues coordinate hydrogencarbonate: Thr470, Arg474, Ala476, and Gly477. A glycan (N-linked (GlcNAc...) asparagine) is linked at Asn509. Tyr533 contacts Fe(3+). Fe(3+) is bound at residue His601. A Phosphoserine modification is found at Ser682.

Belongs to the transferrin family. Monomer. Part of a complex composed of SLC40A1/ferroportin, TF/transferrin and HEPH/hephaestin that transfers iron from cells to transferrin. Expressed by the liver and secreted in plasma.

Its subcellular location is the secreted. Its function is as follows. Transferrins are iron binding transport proteins which can bind two Fe(3+) ions in association with the binding of an anion, usually bicarbonate. It is responsible for the transport of iron from sites of absorption and heme degradation to those of storage and utilization. Serum transferrin may also have a further role in stimulating cell proliferation. In Oryctolagus cuniculus (Rabbit), this protein is Serotransferrin (TF).